A 143-amino-acid polypeptide reads, in one-letter code: Large ribosomal subunit protein uL13 (143 aa).

The protein belongs to the universal ribosomal protein uL13 family. Part of the 50S ribosomal subunit.

In terms of biological role, this protein is one of the early assembly proteins of the 50S ribosomal subunit, although it is not seen to bind rRNA by itself. It is important during the early stages of 50S assembly. The sequence is that of Large ribosomal subunit protein uL13 from Prochlorococcus marinus (strain MIT 9312).